A 135-amino-acid polypeptide reads, in one-letter code: Putative pre-16S rRNA nuclease (135 aa).

Belongs to the YqgF nuclease family.

It localises to the cytoplasm. Could be a nuclease involved in processing of the 5'-end of pre-16S rRNA. The chain is Putative pre-16S rRNA nuclease from Thermus thermophilus (strain ATCC 27634 / DSM 579 / HB8).